The primary structure comprises 354 residues: Fructose-bisphosphate aldolase (354 aa).

Ser61 lines the D-glyceraldehyde 3-phosphate pocket. Asp104 acts as the Proton donor in catalysis. Zn(2+)-binding residues include His105, Asp139, Glu169, and His221. Residue Gly222 coordinates dihydroxyacetone phosphate. His260 lines the Zn(2+) pocket. Residues Gly261–Ser263 and Asn282–Thr285 each bind dihydroxyacetone phosphate.

It belongs to the class II fructose-bisphosphate aldolase family. In terms of assembly, homodimer. Zn(2+) serves as cofactor.

The catalysed reaction is beta-D-fructose 1,6-bisphosphate = D-glyceraldehyde 3-phosphate + dihydroxyacetone phosphate. It participates in carbohydrate degradation; glycolysis; D-glyceraldehyde 3-phosphate and glycerone phosphate from D-glucose: step 4/4. In terms of biological role, catalyzes the aldol condensation of dihydroxyacetone phosphate (DHAP or glycerone-phosphate) with glyceraldehyde 3-phosphate (G3P) to form fructose 1,6-bisphosphate (FBP) in gluconeogenesis and the reverse reaction in glycolysis. This is Fructose-bisphosphate aldolase (fba) from Campylobacter jejuni subsp. jejuni serotype O:23/36 (strain 81-176).